The primary structure comprises 544 residues: CTP synthase (544 aa).

An amidoligase domain region spans residues 1–267 (MTKFVFVTGG…AQRVLEILNL (267 aa)). Position 13 (Ser13) interacts with CTP. Ser13 is a binding site for UTP. Position 14–19 (14–19 (SIGKGI)) interacts with ATP. Tyr54 lines the L-glutamine pocket. Residue Asp71 participates in ATP binding. Mg(2+) is bound by residues Asp71 and Glu141. Residues 148 to 150 (DIE), 188 to 193 (KTKPTQ), and Lys224 each bind CTP. Residues 188 to 193 (KTKPTQ) and Lys224 each bind UTP. In terms of domain architecture, Glutamine amidotransferase type-1 spans 292 to 534 (EIAIVGKYVR…IEAALRSRPQ (243 aa)). Residue Gly354 coordinates L-glutamine. Catalysis depends on Cys381, which acts as the Nucleophile; for glutamine hydrolysis. Residues 382 to 385 (LGMQ), Glu405, and Arg462 contribute to the L-glutamine site. Active-site residues include His507 and Glu509.

Belongs to the CTP synthase family. In terms of assembly, homotetramer.

It catalyses the reaction UTP + L-glutamine + ATP + H2O = CTP + L-glutamate + ADP + phosphate + 2 H(+). It carries out the reaction L-glutamine + H2O = L-glutamate + NH4(+). The catalysed reaction is UTP + NH4(+) + ATP = CTP + ADP + phosphate + 2 H(+). It participates in pyrimidine metabolism; CTP biosynthesis via de novo pathway; CTP from UDP: step 2/2. Allosterically activated by GTP, when glutamine is the substrate; GTP has no effect on the reaction when ammonia is the substrate. The allosteric effector GTP functions by stabilizing the protein conformation that binds the tetrahedral intermediate(s) formed during glutamine hydrolysis. Inhibited by the product CTP, via allosteric rather than competitive inhibition. Functionally, catalyzes the ATP-dependent amination of UTP to CTP with either L-glutamine or ammonia as the source of nitrogen. Regulates intracellular CTP levels through interactions with the four ribonucleotide triphosphates. The chain is CTP synthase from Synechococcus sp. (strain JA-2-3B'a(2-13)) (Cyanobacteria bacterium Yellowstone B-Prime).